The sequence spans 873 residues: Coatomer subunit gamma-2 (873 aa).

Residues 1 to 11 (MIKKFDKKDEE) show a composition bias toward basic and acidic residues. Residues 1–21 (MIKKFDKKDEESGSGSNPFQH) are disordered. HEAT repeat units follow at residues 64–101 (TEAT…ISED), 283–320 (RELA…KHPS), 321–355 (AVTA…GSES), 356–392 (SVDR…KYPR), 395–430 (SVMM…ENPE), and 467–504 (PTPS…QNDD).

It belongs to the COPG family. Oligomeric complex.

It is found in the cytoplasm. It localises to the golgi apparatus membrane. The protein localises to the cytoplasmic vesicle. The protein resides in the COPI-coated vesicle membrane. The coatomer is a cytosolic protein complex that binds to dilysine motifs and reversibly associates with Golgi non-clathrin-coated vesicles, which further mediate biosynthetic protein transport from the ER, via the Golgi up to the trans Golgi network. Coatomer complex is required for budding from Golgi membranes, and is essential for the retrograde Golgi-to-ER transport of dilysine-tagged proteins. This chain is Coatomer subunit gamma-2 (copg2), found in Danio rerio (Zebrafish).